A 122-amino-acid chain; its full sequence is Aspartate 1-decarboxylase (122 aa).

Ser25 (schiff-base intermediate with substrate; via pyruvic acid) is an active-site residue. Residue Ser25 is modified to Pyruvic acid (Ser). Thr57 contributes to the substrate binding site. The active-site Proton donor is the Tyr58. 73–75 provides a ligand contact to substrate; that stretch reads GAA.

The protein belongs to the PanD family. Heterooctamer of four alpha and four beta subunits. Requires pyruvate as cofactor. In terms of processing, is synthesized initially as an inactive proenzyme, which is activated by self-cleavage at a specific serine bond to produce a beta-subunit with a hydroxyl group at its C-terminus and an alpha-subunit with a pyruvoyl group at its N-terminus.

The protein resides in the cytoplasm. The enzyme catalyses L-aspartate + H(+) = beta-alanine + CO2. It functions in the pathway cofactor biosynthesis; (R)-pantothenate biosynthesis; beta-alanine from L-aspartate: step 1/1. Functionally, catalyzes the pyruvoyl-dependent decarboxylation of aspartate to produce beta-alanine. The polypeptide is Aspartate 1-decarboxylase (Bordetella parapertussis (strain 12822 / ATCC BAA-587 / NCTC 13253)).